The chain runs to 138 residues: Small ribosomal subunit protein uS11c (138 aa).

A disordered region spans residues Met-1–Asn-21. The segment covering Gly-9–Asn-21 has biased composition (basic residues).

It belongs to the universal ribosomal protein uS11 family. In terms of assembly, part of the 30S ribosomal subunit.

It localises to the plastid. The protein resides in the chloroplast. The protein is Small ribosomal subunit protein uS11c of Calycanthus floridus var. glaucus (Eastern sweetshrub).